We begin with the raw amino-acid sequence, 96 residues long: Large ribosomal subunit protein eL43 (96 aa).

A C4-type zinc finger spans residues 41-62 (CPVCGFMKLKRISTSIWECKKC).

The protein belongs to the eukaryotic ribosomal protein eL43 family. Zn(2+) serves as cofactor.

In Methanococcus aeolicus (strain ATCC BAA-1280 / DSM 17508 / OCM 812 / Nankai-3), this protein is Large ribosomal subunit protein eL43.